The primary structure comprises 385 residues: S-type anion channel SLAH1 (385 aa).

The Cytoplasmic portion of the chain corresponds to 1–42 (MEIPRQEIHIEIDNSIPSSKEFKTGLADAKPVVLMSALRSLH). A helical transmembrane segment spans residues 43–65 (AGYFRISLSLCSQALLWKIMIAP). Over 66–81 (ESPSMSHMHSKLPSMA) the chain is Extracellular. A helical membrane pass occupies residues 82 to 102 (FHLLWYLALVTQVSLCFLYAL). Topologically, residues 103–114 (KCIFFFDKVKEE) are cytoplasmic. The helical transmembrane segment at 115–135 (FLHYIGVNYLYAPSISWLLML) threads the bilayer. Over 136 to 150 (QSAPMMEPNSVLYQT) the chain is Extracellular. A helical membrane pass occupies residues 151–171 (LFWIFAVPVLTLDIKLYGQWF). Over 172–176 (TTEKR) the chain is Cytoplasmic. A helical transmembrane segment spans residues 177-197 (FLSMLANPASQVSVIANLVAA). Over 198–207 (RGAAEMGWNE) the chain is Extracellular. Residues 208–228 (CALCMFSLGMVHYLVIFVTLY) traverse the membrane as a helical segment. Over 229–243 (QRLPGGNNFPAKLRP) the chain is Cytoplasmic. Residues 244 to 264 (IFFLFVAAPAMASLAWNSICG) form a helical membrane-spanning segment. Residue T265 is a topological domain, extracellular. Residues 266–286 (FDAVAKMLFFLSLFIFMSLVC) traverse the membrane as a helical segment. The Cytoplasmic portion of the chain corresponds to 287 to 299 (RPNLFKKSMKRFN). Residues 300 to 320 (VAWWAYSFPLTFLALDSVQYA) traverse the membrane as a helical segment. Residues 321 to 330 (QEVKDPVGSG) lie on the Extracellular side of the membrane. A helical transmembrane segment spans residues 331–351 (LMLIFSSISVLIFLGMMVLTA). The Cytoplasmic portion of the chain corresponds to 352 to 385 (ANSNRLLRHDPVLGSATDPKDKQKTLSLNATNQN). The interval 366–385 (SATDPKDKQKTLSLNATNQN) is disordered. Residues 376 to 385 (TLSLNATNQN) are compositionally biased toward polar residues.

This sequence belongs to the SLAC1 S-type anion channel family. In terms of assembly, homotrimer. In terms of tissue distribution, expressed in the vascular systems of root.

The protein localises to the cell membrane. Its function is as follows. Slow, weak voltage-dependent S-type anion efflux channel involved in maintenance of anion homeostasis. The protein is S-type anion channel SLAH1 (SLAH1) of Arabidopsis thaliana (Mouse-ear cress).